Here is a 268-residue protein sequence, read N- to C-terminus: Tropinone reductase homolog At2g29170 (268 aa).

Position 22 to 46 (22 to 46) interacts with NADP(+); sequence LVTGGSKGLGEAVVEELAMLGARVH. Serine 155 serves as a coordination point for substrate. Tyrosine 168 functions as the Proton acceptor in the catalytic mechanism.

The protein belongs to the short-chain dehydrogenases/reductases (SDR) family. SDR65C subfamily.

This Arabidopsis thaliana (Mouse-ear cress) protein is Tropinone reductase homolog At2g29170.